Consider the following 558-residue polypeptide: Atlastin-1 (558 aa).

The interval 1–28 (MAKSRRDRNSWGGFSEKSSDWSSEEEEP) is disordered. The N-terminal hypervariable region (HVR) stretch occupies residues 1–34 (MAKSRRDRNSWGGFSEKSSDWSSEEEEPVRKAGP). Residues 1–449 (MAKSRRDRNS…NIFHAARTPA (449 aa)) lie on the Cytoplasmic side of the membrane. 3 positions are modified to phosphoserine: S10, S22, and S23. In terms of domain architecture, GB1/RHD3-type G spans 64 to 309 (DKEVVAVSVA…LIPWLLSPER (246 aa)). Residues R77, K78, G79, K80, S81, F82, Q148, R217, D218, V276, and N279 each coordinate GDP. GTP contacts are provided by R77, K78, G79, K80, S81, and F82. S81 lines the Mg(2+) pocket. Residues R217, D218, and V276 each coordinate GTP. Positions 347–438 (MLQATAEANN…YIQYIKHNDS (92 aa)) are 3HB (three-helix bundle) domain. K395 carries the N6-acetyllysine modification. Positions 412–439 (EFSRRYLQQLESEIDELYIQYIKHNDSK) form a coiled coil. Residues 439–447 (KNIFHAART) are linker. A helical transmembrane segment spans residues 450–470 (TLFVVIFITYVIAGVTGFIGL). Residue D471 is a topological domain, lumenal. The chain crosses the membrane as a helical span at residues 472 to 492 (IIASLCNMIMGLTLITLCTWA). Residues 493 to 558 (YIRYSGEYRE…PTQQPEKKKI (66 aa)) lie on the Cytoplasmic side of the membrane. Residues 521-558 (NEALYKLYSAAATHRHLCHQAFPAPKSEPTQQPEKKKI) form an autoinhibitory domain region.

It belongs to the TRAFAC class dynamin-like GTPase superfamily. GB1/RHD3 GTPase family. GB1 subfamily. In terms of assembly, monomeric and homodimeric. The homodimer, transiently formed by two molecules on opposing membranes, is the active form mediating ER membrane fusion. Interacts with REEP1, REEP5, RTN3 and RTN4 (via the transmembrane region); these proteins are involved in endoplasmic reticulum tubular network organization. Interacts with ZFYVE27; both proteins are involved in endoplasmic reticulum tubular network organization. Interacts with ARL6IP1; both proteins are involved in endoplasmic reticulum tubular network organization. Interacts with SPAST; the interaction is direct, could recruit SPAST to Golgi membranes. Interacts (via N-terminal region) with MAP4K4 (via CNH regulatory domain). May interact with TMED2. Interacts with CPT1C. In terms of processing, phosphorylated. Phosphorylation, by different kinases, of the N-terminal hypervariable region (HVR) regulates the ATL1-mediated membrane tethering step.

The protein localises to the endoplasmic reticulum membrane. It localises to the golgi apparatus membrane. It is found in the cell projection. The protein resides in the axon. It carries out the reaction GTP + H2O = GDP + phosphate + H(+). Functionally, atlastin-1 (ATL1) is a membrane-anchored GTPase that mediates the GTP-dependent fusion of endoplasmic reticulum (ER) membranes, maintaining the continuous ER network. It facilitates the formation of three-way junctions where ER tubules intersect. Two atlastin-1 on neighboring ER tubules bind GTP and form loose homodimers through the GB1/RHD3-type G domains and 3HB regions. Upon GTP hydrolysis, the 3HB regions tighten, pulling the membranes together to drive their fusion. After fusion, the homodimer disassembles upon release of inorganic phosphate (Pi). Subsequently, GDP dissociates, resetting the monomers to a conformation ready for a new fusion cycle. May also regulate more or less directly Golgi biogenesis. Indirectly regulates axonal development. The sequence is that of Atlastin-1 from Mus musculus (Mouse).